The sequence spans 77 residues: UPF0291 protein OB1671 (77 aa).

Residues 56–77 are disordered; the sequence is DPEGKDVTPQKLRDYQDRNKKH. Positions 57–77 are enriched in basic and acidic residues; sequence PEGKDVTPQKLRDYQDRNKKH.

It belongs to the UPF0291 family.

It is found in the cytoplasm. The polypeptide is UPF0291 protein OB1671 (Oceanobacillus iheyensis (strain DSM 14371 / CIP 107618 / JCM 11309 / KCTC 3954 / HTE831)).